Reading from the N-terminus, the 260-residue chain is Small ribosomal subunit protein uS2 (260 aa).

The protein belongs to the universal ribosomal protein uS2 family.

This is Small ribosomal subunit protein uS2 from Mesorhizobium japonicum (strain LMG 29417 / CECT 9101 / MAFF 303099) (Mesorhizobium loti (strain MAFF 303099)).